The sequence spans 349 residues: ATPase GET3 (349 aa).

Lysine 26 to threonine 33 is an ATP binding site. The active site involves aspartate 57. 2 residues coordinate ATP: glutamate 242 and asparagine 269. Positions 281 and 284 each coordinate Zn(2+).

This sequence belongs to the arsA ATPase family. As to quaternary structure, homodimer. Component of the Golgi to ER traffic (GET) complex, which is composed of GET1, GET2 and GET3. Within the complex, GET1 and GET2 form a heterotetramer which is stabilized by phosphatidylinositol binding and which binds to the GET3 homodimer. Interacts with the chloride channel protein GEF1.

The protein localises to the cytoplasm. It localises to the endoplasmic reticulum. It is found in the golgi apparatus. ATPase required for the post-translational delivery of tail-anchored (TA) proteins to the endoplasmic reticulum. Recognizes and selectively binds the transmembrane domain of TA proteins in the cytosol. This complex then targets to the endoplasmic reticulum by membrane-bound receptors GET1 and GET2, where the tail-anchored protein is released for insertion. This process is regulated by ATP binding and hydrolysis. ATP binding drives the homodimer towards the closed dimer state, facilitating recognition of newly synthesized TA membrane proteins. ATP hydrolysis is required for insertion. Subsequently, the homodimer reverts towards the open dimer state, lowering its affinity for the GET1-GET2 receptor, and returning it to the cytosol to initiate a new round of targeting. Cooperates with the HDEL receptor ERD2 to mediate the ATP-dependent retrieval of resident ER proteins that contain a C-terminal H-D-E-L retention signal from the Golgi to the ER. Involved in low-level resistance to the oxyanions arsenite and arsenate, and in heat tolerance. The polypeptide is ATPase GET3 (Candida tropicalis (strain ATCC MYA-3404 / T1) (Yeast)).